A 288-amino-acid polypeptide reads, in one-letter code: Beta-lactamase CARB-4 (288 aa).

The N-terminal stretch at 1–17 is a signal peptide; it reads MKLLLVFSLLIPSMVFA. Serine 65 (acyl-ester intermediate) is an active-site residue. A disulfide bond links cysteine 72 and cysteine 118. 229 to 231 is a binding site for substrate; the sequence is RSG.

Belongs to the class-A beta-lactamase family.

It catalyses the reaction a beta-lactam + H2O = a substituted beta-amino acid. Inhibited by clavulanic acid and sulbactam. Functionally, hydrolyzes carbenicillin. Methicillin and oxacillin are weakly hydrolyzed. The sequence is that of Beta-lactamase CARB-4 (carB4) from Pseudomonas aeruginosa.